The sequence spans 304 residues: Transcription factor bHLH94 (304 aa).

Residues 86 to 107 (VESHPPPQHRRKRRRTRNCKNK) are disordered. Positions 92–104 (PQHRRKRRRTRNC) are enriched in basic residues. The bHLH domain occupies 112-163 (NQRMTHIAVERNRRKQMNEYLAVLRSLMPSSYAQRGDQASIVGGAINYVKEL).

As to quaternary structure, homodimer. Expressed constitutively in roots, leaves, stems, and flowers.

It is found in the nucleus. This chain is Transcription factor bHLH94 (BHLH94), found in Arabidopsis thaliana (Mouse-ear cress).